The primary structure comprises 289 residues: MELRHLRYFKVLAETLNFTRAAELLHIAQPPLSRQISQLEDQLGTLLVVRERPLRLTEAGRFFYEQSCTVLQLQNISDNTRRIGQGQRQWLGIGFAPSTLYKVLPELIRELRQDSELELGLNEMTTLQQVEALKSGRIDIAFGRIRIDDPAIHQQVLCEDPLVAVLPKDHPLASSPLTLAQLAGEAFILYPANPRPSYADHVLALFAHHGMSIHVSQWANELQTAIGLVAVGVGVTLVPASVQQQHRTDIEYVSLLDSGAVSPIILSRRKGDVSPIVQRCLTLIAQQAE.

Positions 1–57 constitute an HTH lysR-type domain; the sequence is MELRHLRYFKVLAETLNFTRAAELLHIAQPPLSRQISQLEDQLGTLLVVRERPLRLT. Residues 18 to 37 constitute a DNA-binding region (H-T-H motif); sequence FTRAAELLHIAQPPLSRQIS.

Belongs to the LysR transcriptional regulatory family.

It localises to the cytoplasm. In terms of biological role, positive regulator of the catBC operon that degrades catechol to acetyl-CoA. CatR binds in trans to the catR-catBC promoter-control region in the presence or absence of inducer but only activates the catBC operon in the presence of the inducer, cis-cis-muconate. The protein is HTH-type transcriptional regulator CatR (catR) of Pseudomonas putida (Arthrobacter siderocapsulatus).